The primary structure comprises 1543 residues: DNA-directed RNA polymerase subunit beta' (1543 aa).

Residues Cys-60, Cys-62, Cys-75, and Cys-78 each contribute to the Zn(2+) site. 3 residues coordinate Mg(2+): Asp-627, Asp-629, and Asp-631. Zn(2+) is bound by residues Cys-1017, Cys-1097, Cys-1104, and Cys-1107. 2 disordered regions span residues 1466 to 1490 and 1522 to 1543; these read PADR…APPR and AEEG…EENV.

This sequence belongs to the RNA polymerase beta' chain family. As to quaternary structure, the RNAP catalytic core consists of 2 alpha, 1 beta, 1 beta' and 1 omega subunit. When a sigma factor is associated with the core the holoenzyme is formed, which can initiate transcription. Mg(2+) serves as cofactor. It depends on Zn(2+) as a cofactor.

The enzyme catalyses RNA(n) + a ribonucleoside 5'-triphosphate = RNA(n+1) + diphosphate. Its function is as follows. DNA-dependent RNA polymerase catalyzes the transcription of DNA into RNA using the four ribonucleoside triphosphates as substrates. In Herpetosiphon aurantiacus (strain ATCC 23779 / DSM 785 / 114-95), this protein is DNA-directed RNA polymerase subunit beta'.